We begin with the raw amino-acid sequence, 138 residues long: UPF0047 protein MJ1081 (138 aa).

This sequence belongs to the UPF0047 family.

This chain is UPF0047 protein MJ1081, found in Methanocaldococcus jannaschii (strain ATCC 43067 / DSM 2661 / JAL-1 / JCM 10045 / NBRC 100440) (Methanococcus jannaschii).